The following is a 209-amino-acid chain: Small ribosomal subunit protein uS4 (209 aa).

Positions 1–13 (MSTKSRTRSKTRL) are enriched in basic residues. Disordered stretches follow at residues 1–20 (MSTKSRTRSKTRLSRALGIP) and 28–49 (YLEKRPYAPGEHGRSKRKQDSD). The S4 RNA-binding domain occupies 95-160 (QRLDALVVRS…TEPFQVAAAG (66 aa)).

It belongs to the universal ribosomal protein uS4 family. Part of the 30S ribosomal subunit. Contacts protein S5. The interaction surface between S4 and S5 is involved in control of translational fidelity.

In terms of biological role, one of the primary rRNA binding proteins, it binds directly to 16S rRNA where it nucleates assembly of the body of the 30S subunit. Its function is as follows. With S5 and S12 plays an important role in translational accuracy. This Clavibacter sepedonicus (Clavibacter michiganensis subsp. sepedonicus) protein is Small ribosomal subunit protein uS4.